The primary structure comprises 211 residues: Thymidylate kinase (211 aa).

ATP is bound at residue 10–17; sequence GPDGAGKT.

Belongs to the thymidylate kinase family.

The enzyme catalyses dTMP + ATP = dTDP + ADP. Functionally, phosphorylation of dTMP to form dTDP in both de novo and salvage pathways of dTTP synthesis. This chain is Thymidylate kinase, found in Lactococcus lactis subsp. cremoris (strain MG1363).